Reading from the N-terminus, the 126-residue chain is S-adenosylmethionine decarboxylase proenzyme (126 aa).

The Schiff-base intermediate with substrate; via pyruvic acid role is filled by S63. S63 carries the pyruvic acid (Ser); by autocatalysis modification. The active-site Proton acceptor; for processing activity is H68. The active-site Proton donor; for catalytic activity is the C83.

It belongs to the prokaryotic AdoMetDC family. Type 1 subfamily. Heterotetramer of two alpha and two beta chains arranged as a dimer of alpha/beta heterodimers. Requires pyruvate as cofactor. Is synthesized initially as an inactive proenzyme. Formation of the active enzyme involves a self-maturation process in which the active site pyruvoyl group is generated from an internal serine residue via an autocatalytic post-translational modification. Two non-identical subunits are generated from the proenzyme in this reaction, and the pyruvate is formed at the N-terminus of the alpha chain, which is derived from the carboxyl end of the proenzyme. The post-translation cleavage follows an unusual pathway, termed non-hydrolytic serinolysis, in which the side chain hydroxyl group of the serine supplies its oxygen atom to form the C-terminus of the beta chain, while the remainder of the serine residue undergoes an oxidative deamination to produce ammonia and the pyruvoyl group blocking the N-terminus of the alpha chain.

The catalysed reaction is S-adenosyl-L-methionine + H(+) = S-adenosyl 3-(methylsulfanyl)propylamine + CO2. Its pathway is amine and polyamine biosynthesis; S-adenosylmethioninamine biosynthesis; S-adenosylmethioninamine from S-adenosyl-L-methionine: step 1/1. Functionally, catalyzes the decarboxylation of S-adenosylmethionine to S-adenosylmethioninamine (dcAdoMet), the propylamine donor required for the synthesis of the polyamines spermine and spermidine from the diamine putrescine. The chain is S-adenosylmethionine decarboxylase proenzyme from Clostridium tetani (strain Massachusetts / E88).